A 181-amino-acid polypeptide reads, in one-letter code: 28 kDa heat- and acid-stable phosphoprotein (181 aa).

Residues 1–14 show a composition bias toward basic residues; sequence MPKGGRKGGHKGRA. The tract at residues 1-117 is disordered; sequence MPKGGRKGGH…SRREREEIEK (117 aa). Phosphothreonine is present on T18. Phosphoserine is present on S19. The span at 30–59 shows a compositional bias: basic and acidic residues; sequence EKQKAREEEEQKEGGDGAAGDPKKEKKSLD. Residue K52 forms a Glycyl lysine isopeptide (Lys-Gly) (interchain with G-Cter in SUMO2) linkage. Phosphoserine is present on residues S57, S60, and S63. A compositionally biased stretch (acidic residues) spans 60–69; the sequence is SDESEDEEDD. Y70 is subject to Phosphotyrosine. A compositionally biased stretch (basic and acidic residues) spans 102-117; the sequence is DGPKELSRREREEIEK. K126 carries the N6-methyllysine modification. An N6-acetyllysine mark is found at K132 and K164. The segment covering 151-167 has biased composition (basic and acidic residues); sequence EEAARKKEEERKAKDDA. Positions 151–181 are disordered; sequence EEAARKKEEERKAKDDATLSGKRMQSLSLNK. 2 positions are modified to phosphoserine: S176 and S178.

This sequence belongs to the PDAP1 family.

Enhances PDGFA-stimulated cell growth in fibroblasts, but inhibits the mitogenic effect of PDGFB. In Homo sapiens (Human), this protein is 28 kDa heat- and acid-stable phosphoprotein (PDAP1).